The following is a 327-amino-acid chain: Cyclic AMP-responsive element-binding protein 1 (327 aa).

Disordered stretches follow at residues 1–29 and 94–113; these read MTMD…TVQA and SEDS…RREI. Residues 8–146 form the KID domain; the sequence is DNQQSGDAAV…IEEEKSEEET (139 aa). The span at 20–29 shows a compositional bias: polar residues; it reads AESQQMTVQA. Serine 119 carries the post-translational modification Phosphoserine; by CaMK1, CaMK2, CaMK4, PKB/AKT1 or PKB/AKT2, RPS6KA3, RPS6KA4, RPS6KA5 and SGK1. Residue lysine 122 forms a Glycyl lysine isopeptide (Lys-Gly) (interchain with G-Cter in SUMO2) linkage. The tract at residues 126 to 149 is disordered; sequence DLSSDAPGVPRIEEEKSEEETSAP. Serine 128 carries the post-translational modification Phosphoserine; by CaMK2. Serine 257 carries the phosphoserine; by HIPK2 modification. In terms of domain architecture, bZIP spans 269–327; sequence ARKREVRLMKNREAARECRRKKKEYVKCLENRVAVLENQNKTLIEELKALKDLYCHKSD. The tract at residues 270 to 295 is basic motif; that stretch reads RKREVRLMKNREAARECRRKKKEYVK. Glycyl lysine isopeptide (Lys-Gly) (interchain with G-Cter in SUMO1) cross-links involve residues lysine 271 and lysine 290. The interval 297-318 is leucine-zipper; that stretch reads LENRVAVLENQNKTLIEELKAL.

The protein belongs to the bZIP family. In terms of assembly, interacts with PPRC1. Binds DNA as a dimer. This dimer is stabilized by magnesium ions. Interacts, through the bZIP domain, with the coactivators CRTC1/TORC1, CRTC2/TORC2 and CRTC3/TORC3. When phosphorylated on Ser-119, binds CREBBP. Interacts with CREBL2; regulates CREB1 phosphorylation, stability and transcriptional activity. Interacts (phosphorylated form) with TOX3. Interacts with ARRB1. Binds to HIPK2. Interacts with SGK1. Interacts with TSSK4; this interaction facilitates phosphorylation on Ser-119. Forms a complex with KMT2A and CREBBP. Interacts with TOX4; CREB1 is required for full induction of TOX4-dependent activity and the interaction is increased by cAMP and inhibited by insulin. Post-translationally, phosphorylation of Ser-119 allows CREBBP binding. Stimulated by phosphorylation. Phosphorylation of both Ser-128 and Ser-119 in the SCN regulates the activity of CREB and participate in circadian rhythm generation. Phosphorylated upon calcium influx by CaMK4 and CaMK2 on Ser-119. CaMK4 is much more potent than CaMK2 in activating CREB. Phosphorylated by CaMK2 on Ser-128. Phosphorylation of Ser-128 blocks CREB-mediated transcription even when Ser-119 is phosphorylated. Phosphorylated by CaMK1. Phosphorylation of Ser-257 by HIPK2 in response to genotoxic stress promotes CREB1 activity, facilitating the recruitment of the coactivator CBP. Phosphorylated at Ser-119 by RPS6KA3, RPS6KA4 and RPS6KA5 in response to mitogenic or stress stimuli. CREBL2 positively regulates phosphorylation at Ser-119 thereby stimulating CREB1 transcriptional activity. In liver, phosphorylation is induced by fasting or glucagon in a circadian fashion. Phosphorylated by TSSK4 on Ser-119. In terms of processing, sumoylated with SUMO1. Sumoylation on Lys-290, but not on Lys-271, is required for nuclear localization of this protein. Sumoylation is enhanced under hypoxia, promoting nuclear localization and stabilization.

Its subcellular location is the nucleus. Its function is as follows. Phosphorylation-dependent transcription factor that stimulates transcription upon binding to the DNA cAMP response element (CRE), a sequence present in many viral and cellular promoters. Transcription activation is enhanced by the TORC coactivators which act independently of Ser-119 phosphorylation. Involved in different cellular processes including the synchronization of circadian rhythmicity and the differentiation of adipose cells. Regulates the expression of apoptotic and inflammatory response factors in cardiomyocytes in response to ERFE-mediated activation of AKT signaling. This chain is Cyclic AMP-responsive element-binding protein 1 (Creb1), found in Rattus norvegicus (Rat).